We begin with the raw amino-acid sequence, 59 residues long: Small, acid-soluble spore protein H (59 aa).

This sequence belongs to the SspH family.

It localises to the spore core. The protein is Small, acid-soluble spore protein H of Bacillus thuringiensis subsp. konkukian (strain 97-27).